The chain runs to 148 residues: Deoxyuridine 5'-triphosphate nucleotidohydrolase (148 aa).

Substrate is bound by residues 68-70 (RSG), N81, 85-87 (TVD), and K95.

The protein belongs to the dUTPase family. Requires Mg(2+) as cofactor.

It catalyses the reaction dUTP + H2O = dUMP + diphosphate + H(+). The protein operates within pyrimidine metabolism; dUMP biosynthesis; dUMP from dCTP (dUTP route): step 2/2. In terms of biological role, this enzyme is involved in nucleotide metabolism: it produces dUMP, the immediate precursor of thymidine nucleotides and it decreases the intracellular concentration of dUTP so that uracil cannot be incorporated into DNA. This chain is Deoxyuridine 5'-triphosphate nucleotidohydrolase, found in Caldanaerobacter subterraneus subsp. tengcongensis (strain DSM 15242 / JCM 11007 / NBRC 100824 / MB4) (Thermoanaerobacter tengcongensis).